Here is a 700-residue protein sequence, read N- to C-terminus: Acyl-coenzyme A oxidase 2 (700 aa).

Belongs to the acyl-CoA oxidase family. As to quaternary structure, heteropentamer composed of five different subunits. Requires FAD as cofactor.

The protein localises to the peroxisome. The catalysed reaction is a 2,3-saturated acyl-CoA + O2 = a (2E)-enoyl-CoA + H2O2. Its pathway is lipid metabolism; peroxisomal fatty acid beta-oxidation. Oxidizes strain chain acyl-CoAs with a chain length of 10 to 14 carbons. Also active toward the 2S isomers of acyl-CoA-esters containing a 2-methyl group. In Yarrowia lipolytica (strain CLIB 122 / E 150) (Yeast), this protein is Acyl-coenzyme A oxidase 2 (POX2).